The sequence spans 127 residues: Protein ApaG (127 aa).

The ApaG domain occupies 3–127; it reads KSETYRIEVE…FMLAMPRVLH (125 aa).

The protein is Protein ApaG of Azoarcus sp. (strain BH72).